Consider the following 527-residue polypeptide: Probable guanine deaminase (527 aa).

Residues His79 and His81 each contribute to the Zn(2+) site. Residues 81 to 84 (HAPQ), 212 to 213 (RF), 239 to 242 (HISE), and Asp329 each bind substrate. 2 residues coordinate Zn(2+): His239 and Asp329.

This sequence belongs to the metallo-dependent hydrolases superfamily. ATZ/TRZ family. The cofactor is Zn(2+).

The catalysed reaction is guanine + H2O + H(+) = xanthine + NH4(+). It functions in the pathway purine metabolism; guanine degradation; xanthine from guanine: step 1/1. Functionally, catalyzes the hydrolytic deamination of guanine, producing xanthine and ammonia. The sequence is that of Probable guanine deaminase from Schizosaccharomyces pombe (strain 972 / ATCC 24843) (Fission yeast).